The following is a 1071-amino-acid chain: Carbamoyl phosphate synthase large chain (1071 aa).

The interval 1–403 (MPKRTDLKSI…SFQKALRGLE (403 aa)) is carboxyphosphate synthetic domain. Arg129, Arg169, Gly175, Gly176, Gln208, Val210, Glu215, Gly241, Val242, His243, Gln285, and Glu299 together coordinate ATP. The 196-residue stretch at 133-328 (KEAMEKIGLS…IAKVAAKLAV (196 aa)) folds into the ATP-grasp 1 domain. The Mg(2+) site is built by Gln285, Glu299, and Asn301. Mn(2+) is bound by residues Gln285, Glu299, and Asn301. The oligomerization domain stretch occupies residues 404–548 (TGLCGFNPRS…YSTYEEECES (145 aa)). The segment at 549 to 930 (RPSDRKKVMI…AYYKAQLGAG (382 aa)) is carbamoyl phosphate synthetic domain. An ATP-grasp 2 domain is found at 673–864 (QKVLNDLGLR…LAKVGARCMA (192 aa)). 10 residues coordinate ATP: Arg709, Phe748, Leu750, Glu755, Gly780, Ile781, His782, Ser783, Gln823, and Glu835. 3 residues coordinate Mg(2+): Gln823, Glu835, and Asn837. Mn(2+) contacts are provided by Gln823, Glu835, and Asn837. Positions 931–1071 (ERLNPTGKIF…ELHGRLKNRN (141 aa)) constitute an MGS-like domain. The segment at 931–1071 (ERLNPTGKIF…ELHGRLKNRN (141 aa)) is allosteric domain.

The protein belongs to the CarB family. In terms of assembly, composed of two chains; the small (or glutamine) chain promotes the hydrolysis of glutamine to ammonia, which is used by the large (or ammonia) chain to synthesize carbamoyl phosphate. Tetramer of heterodimers (alpha,beta)4. Mg(2+) serves as cofactor. Mn(2+) is required as a cofactor.

The enzyme catalyses hydrogencarbonate + L-glutamine + 2 ATP + H2O = carbamoyl phosphate + L-glutamate + 2 ADP + phosphate + 2 H(+). It catalyses the reaction hydrogencarbonate + NH4(+) + 2 ATP = carbamoyl phosphate + 2 ADP + phosphate + 2 H(+). It participates in amino-acid biosynthesis; L-arginine biosynthesis; carbamoyl phosphate from bicarbonate: step 1/1. The protein operates within pyrimidine metabolism; UMP biosynthesis via de novo pathway; (S)-dihydroorotate from bicarbonate: step 1/3. Large subunit of the glutamine-dependent carbamoyl phosphate synthetase (CPSase). CPSase catalyzes the formation of carbamoyl phosphate from the ammonia moiety of glutamine, carbonate, and phosphate donated by ATP, constituting the first step of 2 biosynthetic pathways, one leading to arginine and/or urea and the other to pyrimidine nucleotides. The large subunit (synthetase) binds the substrates ammonia (free or transferred from glutamine from the small subunit), hydrogencarbonate and ATP and carries out an ATP-coupled ligase reaction, activating hydrogencarbonate by forming carboxy phosphate which reacts with ammonia to form carbamoyl phosphate. The polypeptide is Carbamoyl phosphate synthase large chain (Neisseria meningitidis serogroup B (strain ATCC BAA-335 / MC58)).